Consider the following 455-residue polypeptide: MTLTQEFDTIAAISTPLGEGAIAIVRLSGTDALKIAQSVYKGKNLAQVASHTINYGHIFEEERLVDEVMVSVMRAPKTFTREDIVEINTHGGIAVTQEILQLLLRNGARLAEPGEFTKRAFLNGRIDLAQAESVMDLIRAKTDKAANIAVKQLDGSLSKMINNIRQDILESLAQVEVNIDYPEYDDVETMTSQMLLEKTAHFEQLLENLLSTAKRGKILREGLKTAIIGRPNVGKSSLLNQLLREEKAIVTDIAGTTRDVITEFANIGGVPLELVDTAGIRETDDLVEAIGVERSKKALAEADLVLLVLDASLELTDKDLELLELSKNANRIVLLNKTDLPEKLDINQISGDFIRISALKNENLSAVEEKINQIFFAGEIEAKDATVLSNARHISLVEEALKALKEANNGLALGLPVDLIQVDVTRCWQLLGEITGEAAPDELITQLFSQFCLGK.

The (6S)-5-formyl-5,6,7,8-tetrahydrofolate site is built by R26, E86, and R125. In terms of domain architecture, TrmE-type G spans 222-376 (GLKTAIIGRP…VEEKINQIFF (155 aa)). N232 serves as a coordination point for K(+). Residues 232-237 (NVGKSS), 251-257 (TDIAGTT), and 276-279 (DTAG) each bind GTP. A Mg(2+)-binding site is contributed by S236. 3 residues coordinate K(+): T251, I253, and T256. Residue T257 participates in Mg(2+) binding. K455 serves as a coordination point for (6S)-5-formyl-5,6,7,8-tetrahydrofolate.

This sequence belongs to the TRAFAC class TrmE-Era-EngA-EngB-Septin-like GTPase superfamily. TrmE GTPase family. As to quaternary structure, homodimer. Heterotetramer of two MnmE and two MnmG subunits. The cofactor is K(+).

The protein resides in the cytoplasm. Its function is as follows. Exhibits a very high intrinsic GTPase hydrolysis rate. Involved in the addition of a carboxymethylaminomethyl (cmnm) group at the wobble position (U34) of certain tRNAs, forming tRNA-cmnm(5)s(2)U34. In Lactococcus lactis subsp. cremoris (strain SK11), this protein is tRNA modification GTPase MnmE.